The following is a 104-amino-acid chain: Large ribosomal subunit protein uL24 (104 aa).

It belongs to the universal ribosomal protein uL24 family. In terms of assembly, part of the 50S ribosomal subunit.

Its function is as follows. One of two assembly initiator proteins, it binds directly to the 5'-end of the 23S rRNA, where it nucleates assembly of the 50S subunit. Functionally, one of the proteins that surrounds the polypeptide exit tunnel on the outside of the subunit. The protein is Large ribosomal subunit protein uL24 of Shewanella sediminis (strain HAW-EB3).